Here is a 473-residue protein sequence, read N- to C-terminus: Photosystem II CP43 reaction center protein (473 aa).

The propeptide occupies 1–14; sequence MKTLYSPRRFYPVE. Residue threonine 15 is modified to N-acetylthreonine. The residue at position 15 (threonine 15) is a Phosphothreonine. The next 5 helical transmembrane spans lie at 69-93, 134-155, 178-200, 255-275, and 291-312; these read LFEV…PHLA, LIGP…KDRN, KALF…RKIT, KPFA…LSYS, and WFNN…ASQA. Glutamate 367 is a binding site for [CaMn4O5] cluster. The helical transmembrane segment at 447–471 threads the bilayer; that stretch reads RARAAAAGFEKGIDRDLEPVLFMTP.

The protein belongs to the PsbB/PsbC family. PsbC subfamily. PSII is composed of 1 copy each of membrane proteins PsbA, PsbB, PsbC, PsbD, PsbE, PsbF, PsbH, PsbI, PsbJ, PsbK, PsbL, PsbM, PsbT, PsbX, PsbY, PsbZ, Psb30/Ycf12, at least 3 peripheral proteins of the oxygen-evolving complex and a large number of cofactors. It forms dimeric complexes. The cofactor is Binds multiple chlorophylls and provides some of the ligands for the Ca-4Mn-5O cluster of the oxygen-evolving complex. It may also provide a ligand for a Cl- that is required for oxygen evolution. PSII binds additional chlorophylls, carotenoids and specific lipids..

The protein resides in the plastid. It localises to the chloroplast thylakoid membrane. Functionally, one of the components of the core complex of photosystem II (PSII). It binds chlorophyll and helps catalyze the primary light-induced photochemical processes of PSII. PSII is a light-driven water:plastoquinone oxidoreductase, using light energy to abstract electrons from H(2)O, generating O(2) and a proton gradient subsequently used for ATP formation. The polypeptide is Photosystem II CP43 reaction center protein (Gnetum parvifolium (Small-leaved jointfir)).